A 480-amino-acid chain; its full sequence is MKVTQEKLPASQIGLEIEITPEITKQTYEQVIKNLASTANIPGFRRGKVPRPILLQRLGTTRIKAAALEELIQDGIEQAVKQEAIPAIGQPQLRSSFEDLINNYEPGKPLTILAAVDVEPEVNLVQYTDLLFQAEEVKYDPEQVDSSLEKERQELATLIPVEGRSAQIGDIAVVDFKGSFAKAEGEDETAELEPIPGAEATDFQVELQEDKFIPGFISGIVGMNPEETREIAAQFPDPYANEDLAGKAATFIVTLKELKEKELPEINDDFAQEISDFETLEELRASLVERYQKEADDKTKTNKQEALLTELLKHVEVDLPLTLVEQEVDAMLTQTAMRLSQQGLDVRKLFTQDIIPQLRERSRTEAIERIKRSLSLREVGKRESIEVTPEEIGVRVKELLEQYPEEKEVDEDRLRSIVENELLTEKTIDWLLEHSSVELVPEGSLSPAEETEAAESDADADVSQTEQENSEPSTTEVTEG.

The PPIase FKBP-type domain maps to 169–264 (GDIAVVDFKG…LKELKEKELP (96 aa)). Residues 441 to 480 (PEGSLSPAEETEAAESDADADVSQTEQENSEPSTTEVTEG) form a disordered region. The segment covering 449–460 (EETEAAESDADA) has biased composition (acidic residues). A compositionally biased stretch (polar residues) spans 462 to 480 (VSQTEQENSEPSTTEVTEG).

This sequence belongs to the FKBP-type PPIase family. Tig subfamily.

It localises to the cytoplasm. It carries out the reaction [protein]-peptidylproline (omega=180) = [protein]-peptidylproline (omega=0). Involved in protein export. Acts as a chaperone by maintaining the newly synthesized protein in an open conformation. Functions as a peptidyl-prolyl cis-trans isomerase. The chain is Trigger factor from Nostoc punctiforme (strain ATCC 29133 / PCC 73102).